Reading from the N-terminus, the 322-residue chain is UDP-galactose transporter homolog 1 (322 aa).

Transmembrane regions (helical) follow at residues 4–24 (FMRQLFVCMIGIYGSFLSWAV), 43–63 (ALLSLAQSFMTVLCGLLWNWF), 76–96 (FLGYFSSIAISASLSSYFGYA), 105–125 (TVILGKSCKLLPVIALHVFVY), and 129–149 (FPPHKYLIVTMITAGVSIFSY). Asn-152 carries N-linked (GlcNAc...) asparagine glycosylation. Transmembrane regions (helical) follow at residues 164–184 (SPIGLLLLFFNLLMDGITNTT), 199–219 (MMIAVNLGIACLNGLYLISPF), 250–270 (LFIFFTLEKFGSITLVTITLT), and 290–310 (IQWLGILLVFLGISLEAGLKI). 2 N-linked (GlcNAc...) asparagine glycosylation sites follow: Asn-313 and Asn-314.

This sequence belongs to the nucleotide-sugar transporter family. SLC35B subfamily.

The protein localises to the endoplasmic reticulum membrane. May be involved in specific transport of UDP-Gal from the cytosol to the Golgi lumen. Involved in the maintenance of optimal conditions for the folding of secretory pathway proteins in the endoplasmic reticulum. The polypeptide is UDP-galactose transporter homolog 1 (hut1) (Schizosaccharomyces pombe (strain 972 / ATCC 24843) (Fission yeast)).